A 182-amino-acid chain; its full sequence is Autophagy-related protein 31 (182 aa).

The tract at residues 105 to 134 is disordered; that stretch reads LTSGNDTGGDAGKKSGDISDPAAGPDVPRE.

Its subcellular location is the cytoplasm. The protein resides in the cytoskeleton. It localises to the preautophagosomal structure. Plays a role in starvation-induced autophagy. Involved in mitophagy. Functions with ATG17 and ATG29 at the preautophagosomal structure (PAS) in order to form normal autophagosomes under starvation conditions. May be involved in microtubule function, such as chromosome segregation and karyogamy. The polypeptide is Autophagy-related protein 31 (CIS1) (Candida glabrata (strain ATCC 2001 / BCRC 20586 / JCM 3761 / NBRC 0622 / NRRL Y-65 / CBS 138) (Yeast)).